A 194-amino-acid chain; its full sequence is E3 ubiquitin-protein ligase RNF185 (194 aa).

The segment at 1–32 (MASKGPTTSASTKSSSTGGTSGSSSSNGAGDN) is disordered. A required for ubiquitin ligase activity and protection against ER stress-induced cell death region spans residues 31–82 (DNTNQDNTFECNICLDTAKDAVISLCGHLFCWPCLHQWLETRPNRQVCPVCK). An RING-type zinc finger spans residues 41 to 82 (CNICLDTAKDAVISLCGHLFCWPCLHQWLETRPNRQVCPVCK). Positions 92-125 (PLYGRGSTGQQDPREKTPPRPQGQRPEPENRGGF) are disordered. Helical transmembrane passes span 133-153 (GGFQMSFGIGAFPFGIFATAF) and 174-194 (QFLSRLFLFVALVIMFWLLIA).

The protein localises to the mitochondrion outer membrane. The protein resides in the endoplasmic reticulum membrane. It catalyses the reaction S-ubiquitinyl-[E2 ubiquitin-conjugating enzyme]-L-cysteine + [acceptor protein]-L-lysine = [E2 ubiquitin-conjugating enzyme]-L-cysteine + N(6)-ubiquitinyl-[acceptor protein]-L-lysine.. The protein operates within protein modification; protein ubiquitination. Its function is as follows. E3 ubiquitin-protein ligase that regulates selective mitochondrial autophagy by mediating 'Lys-63'-linked polyubiquitination. Acts in the endoplasmic reticulum (ER)-associated degradation (ERAD) pathway, which targets misfolded proteins that accumulate in the endoplasmic reticulum (ER) for ubiquitination and subsequent proteasome-mediated degradation. Protects cells from ER stress-induced apoptosis. Responsible for the cotranslational ubiquitination and degradation of CFTR in the ERAD pathway. Also acts as a regulator of the innate antiviral response by catalyzing 'Lys-27'-linked polyubiquitination of CGAS, thereby promoting CGAS cyclic GMP-AMP synthase activity. Preferentially associates with the E2 enzymes UBE2J1 and UBE2J2. This is E3 ubiquitin-protein ligase RNF185 (RNF185) from Gallus gallus (Chicken).